Here is a 433-residue protein sequence, read N- to C-terminus: Ascus wall endo-1,3-alpha-glucanase (433 aa).

This sequence belongs to the glycosyl hydrolase 71 family.

The protein resides in the ascus epiplasm. The catalysed reaction is Endohydrolysis of (1-&gt;3)-alpha-D-glucosidic linkages in isolichenin, pseudonigeran and nigeran.. Its function is as follows. Promotes the release of ascospores from asci by hydrolyzing 1,3-alpha-glucan in the ascus wall. The polypeptide is Ascus wall endo-1,3-alpha-glucanase (Schizosaccharomyces pombe (strain 972 / ATCC 24843) (Fission yeast)).